The sequence spans 484 residues: Glutamyl-tRNA(Gln) amidotransferase subunit A (484 aa).

Active-site charge relay system residues include Lys76 and Ser151. Ser175 serves as the catalytic Acyl-ester intermediate.

Belongs to the amidase family. GatA subfamily. As to quaternary structure, heterotrimer of A, B and C subunits.

It carries out the reaction L-glutamyl-tRNA(Gln) + L-glutamine + ATP + H2O = L-glutaminyl-tRNA(Gln) + L-glutamate + ADP + phosphate + H(+). In terms of biological role, allows the formation of correctly charged Gln-tRNA(Gln) through the transamidation of misacylated Glu-tRNA(Gln) in organisms which lack glutaminyl-tRNA synthetase. The reaction takes place in the presence of glutamine and ATP through an activated gamma-phospho-Glu-tRNA(Gln). The sequence is that of Glutamyl-tRNA(Gln) amidotransferase subunit A from Halorhodospira halophila (strain DSM 244 / SL1) (Ectothiorhodospira halophila (strain DSM 244 / SL1)).